A 382-amino-acid chain; its full sequence is F-box/LRR-repeat/kelch-repeat protein At1g09650 (382 aa).

The F-box domain occupies 7-52 (CLMMESLPHEVVECILERLDADPLLRFKAVSKQWKSTIESPFFQRR). The stretch at 78–101 (IEALTTLVLGSSSSVKIPTPWEEE) is one LRR 1 repeat. Residues 180–227 (PVWLYNSIEIGLENATTCEVFDFSTNAWRYVSPAAPYRIVGCPAPVCV) form a Kelch 1 repeat. An LRR 2 repeat occupies 239–262 (ETKILSFDLHTETFQVVSKAPFAN). A Kelch 2 repeat occupies 270–319 (MCNLDNRLCVSEMKLPNQVIWSFNSGNKTWHKMCSINLDITSRWFGPTQV).

This Arabidopsis thaliana (Mouse-ear cress) protein is F-box/LRR-repeat/kelch-repeat protein At1g09650.